Consider the following 278-residue polypeptide: Probable aquaporin PIP2-8 (278 aa).

N-acetylmethionine is present on methionine 1. Over 1-36 (MSKEVSEEGRHGKDYVDPPPAPLLDMAELKLWSFYR) the chain is Cytoplasmic. Position 3 is an N6,N6-dimethyllysine (lysine 3). A helical membrane pass occupies residues 37 to 57 (AIIAEFIATLLFLYVTVATVI). At 58-74 (GHKNQTGPCGGVGLLGI) the chain is on the extracellular side. Residues 75-95 (AWAFGGMIFVLVYCTAGISGG) traverse the membrane as a helical segment. At 96 to 116 (HINPAVTFGLFLARKVSLPRA) the chain is on the cytoplasmic side. An NPA 1 motif is present at residues 98–100 (NPA). The chain crosses the membrane as a helical span at residues 117 to 137 (VAYMVAQCLGAICGVGLVKAF). The Extracellular segment spans residues 138–158 (MMTPYKRLGGGANTVADGYST). Residues 159-179 (GTALGAEIIGTFVLVYTVFSA) traverse the membrane as a helical segment. Residues 180-192 (TDPKRSARDSHVP) are Cytoplasmic-facing. A helical membrane pass occupies residues 193 to 213 (VLAPLPIGFAVFMVHLATIPI). Residues 214–240 (TGTGINPARSFGAAVIYNNEKAWDDHW) are Extracellular-facing. An NPA 2 motif is present at residues 219–221 (NPA). The chain crosses the membrane as a helical span at residues 241–261 (IFWVGPFVGALAAAAYHQYIL). Topologically, residues 262–278 (RAAAIKALASFRSNPTN) are cytoplasmic. Serine 271 and serine 274 each carry phosphoserine.

Belongs to the MIP/aquaporin (TC 1.A.8) family. PIP (TC 1.A.8.11) subfamily. Expressed in roots and floral buds.

The protein localises to the cell membrane. Functionally, aquaporins facilitate the transport of water and small neutral solutes across cell membranes. This is Probable aquaporin PIP2-8 (PIP2-8) from Arabidopsis thaliana (Mouse-ear cress).